The sequence spans 97 residues: Co-chaperonin GroES (97 aa).

Belongs to the GroES chaperonin family. As to quaternary structure, heptamer of 7 subunits arranged in a ring. Interacts with the chaperonin GroEL.

The protein localises to the cytoplasm. Functionally, together with the chaperonin GroEL, plays an essential role in assisting protein folding. The GroEL-GroES system forms a nano-cage that allows encapsulation of the non-native substrate proteins and provides a physical environment optimized to promote and accelerate protein folding. GroES binds to the apical surface of the GroEL ring, thereby capping the opening of the GroEL channel. The polypeptide is Co-chaperonin GroES (Klebsiella aerogenes (Enterobacter aerogenes)).